The primary structure comprises 62 residues: Sperm protamine P1 (62 aa).

Residues 1-62 (MARYRRHSRS…RYSRRGRRRY (62 aa)) are disordered.

This sequence belongs to the protamine P1 family. Testis.

It is found in the nucleus. Its subcellular location is the chromosome. Functionally, protamines substitute for histones in the chromatin of sperm during the haploid phase of spermatogenesis. They compact sperm DNA into a highly condensed, stable and inactive complex. This Neophascogale lorentzii (Long-clawed marsupial mouse) protein is Sperm protamine P1 (PRM1).